A 279-amino-acid chain; its full sequence is uncharacterized protein (279 aa).

The signal sequence occupies residues 1-21 (MKIIRTLFLLLIAVYGSSVVA).

It to E.coli YfcO.

This is an uncharacterized protein from Salmonella typhimurium (strain LT2 / SGSC1412 / ATCC 700720).